Here is a 936-residue protein sequence, read N- to C-terminus: Sine oculis-binding protein homolog A (936 aa).

Basic and acidic residues predominate over residues 1–14 (MAEMEKEGRPPESK). Disordered stretches follow at residues 1-46 (MAEM…GQAG) and 108-151 (ASTL…HGGL). Residues 108–144 (ASTLENSSGSPPHANSSGSTPTSRNGVTAESSVNPSS) are compositionally biased toward polar residues. FCS-type zinc fingers lie at residues 169–207 (EDSSNVQIMCAWCQKVGVKRYSLSMGSELKSFCSEKCFA) and 247–287 (LKTN…KCLN). 6 disordered regions span residues 311–330 (LPTSDTKSESGAGVQLLTPE), 336–424 (LSEL…VMTP), 486–511 (SPHLHPSSTPTLSGNPPGIMPPHPAA), 574–632 (NPQR…KQTE), 697–727 (PPPALLGETELDGSTSISTGTAKDDHRDTYS), and 842–877 (DSAGKRCSNDQSAITTGTGDDKSQSPEDDPSGEDHA). The segment covering 349–382 (GATIAGPSGSTSGSPSEAGTVCSSSSSSSSSSSS) has biased composition (low complexity). Positions 395–404 (SLPPPHPPPI) are enriched in pro residues. 3 stretches are compositionally biased toward polar residues: residues 617-632 (PPNSDTLSPEFSKQTE), 708-717 (DGSTSISTGT), and 850-859 (NDQSAITTGT).

This sequence belongs to the SOBP family.

Its function is as follows. Implicated in development of the cochlea. This Danio rerio (Zebrafish) protein is Sine oculis-binding protein homolog A (sobpa).